Here is a 334-residue protein sequence, read N- to C-terminus: GTPase Obg (334 aa).

Residues 1–159 (MRFVDEVVIK…KEVRLELNLL (159 aa)) enclose the Obg domain. The region spanning 160 to 331 (ADVALLGLPN…LAKKLNEFLQ (172 aa)) is the OBG-type G domain. GTP contacts are provided by residues 166 to 173 (GLPNAGKS), 191 to 195 (FTTMY), 212 to 215 (DIPG), 282 to 285 (NKID), and 312 to 314 (SAA). Positions 173 and 193 each coordinate Mg(2+).

This sequence belongs to the TRAFAC class OBG-HflX-like GTPase superfamily. OBG GTPase family. In terms of assembly, monomer. The cofactor is Mg(2+).

It localises to the cytoplasm. In terms of biological role, an essential GTPase which binds GTP, GDP and possibly (p)ppGpp with moderate affinity, with high nucleotide exchange rates and a fairly low GTP hydrolysis rate. Plays a role in control of the cell cycle, stress response, ribosome biogenesis and in those bacteria that undergo differentiation, in morphogenesis control. The sequence is that of GTPase Obg from Francisella tularensis subsp. tularensis (strain WY96-3418).